A 362-amino-acid polypeptide reads, in one-letter code: L-arginine:L-lysine amidinotransferase (362 aa).

Active-site residues include aspartate 195 and histidine 244. Cysteine 346 (amidino-cysteine intermediate) is an active-site residue.

It belongs to the amidinotransferase family.

It carries out the reaction L-lysine + L-arginine = L-homoarginine + L-ornithine. It catalyses the reaction L-canavanine + L-ornithine = L-canaline + L-arginine + H(+). Involved in the biosynthesis of phaseolotoxin, a nonhost-specific toxin which is a key component in the development of the halo blight disease of beans. Catalyzes the transfer of an amidino group from arginine to lysine to produce one molecule of homoarginine and one molecule of ornithine, both being precursors in the biosynthesis of phaseolotoxin. Can also use L-canavanine as an alternative amidine donor with L-ornithine as amidine acceptor. The chain is L-arginine:L-lysine amidinotransferase from Pseudomonas savastanoi pv. phaseolicola (Pseudomonas syringae pv. phaseolicola).